We begin with the raw amino-acid sequence, 372 residues long: NAD(P)H-quinone oxidoreductase subunit 1 (372 aa).

Helical transmembrane passes span 29–49, 97–117, 130–150, 176–196, 204–224, 254–274, 308–328, and 347–367; these read WIPFPSFLMIIGATVGVLVVV, WLFTLGPVLVVLPVFVSYLIV, VGIFFWIALSSIAPIGLLMAG, LALSVLAIVMMSNSLSTIDIV, ILGWNIWRQPVGFFIFWIAAL, FALFYLGSYVNLVLSALVFAI, SLGITMTVLKAYFLVFIAVLM, and FLLPVSLVNLLLTAALKLAFP.

Belongs to the complex I subunit 1 family. As to quaternary structure, NDH-1 is composed of at least 11 different subunits.

Its subcellular location is the cellular thylakoid membrane. It catalyses the reaction a plastoquinone + NADH + (n+1) H(+)(in) = a plastoquinol + NAD(+) + n H(+)(out). The catalysed reaction is a plastoquinone + NADPH + (n+1) H(+)(in) = a plastoquinol + NADP(+) + n H(+)(out). Functionally, NDH-1 shuttles electrons from an unknown electron donor, via FMN and iron-sulfur (Fe-S) centers, to quinones in the respiratory and/or the photosynthetic chain. The immediate electron acceptor for the enzyme in this species is believed to be plastoquinone. Couples the redox reaction to proton translocation, and thus conserves the redox energy in a proton gradient. The polypeptide is NAD(P)H-quinone oxidoreductase subunit 1 (Crocosphaera subtropica (strain ATCC 51142 / BH68) (Cyanothece sp. (strain ATCC 51142))).